The sequence spans 148 residues: Small ribosomal subunit protein bS16 (148 aa).

Positions 111 to 122 (AAAGEEPVAEAT) are enriched in low complexity. Residues 111 to 148 (AAAGEEPVAEATTPKKKGGKKAEAEDKAEEQKSEEGQA) are disordered. A compositionally biased stretch (basic and acidic residues) spans 130–148 (KKAEAEDKAEEQKSEEGQA).

Belongs to the bacterial ribosomal protein bS16 family.

The chain is Small ribosomal subunit protein bS16 from Saccharopolyspora erythraea (strain ATCC 11635 / DSM 40517 / JCM 4748 / NBRC 13426 / NCIMB 8594 / NRRL 2338).